The chain runs to 281 residues: NADPH-dependent 7-cyano-7-deazaguanine reductase (281 aa).

88 to 90 lines the substrate pocket; the sequence is IES. 90–91 lines the NADPH pocket; it reads SK. Cys-189 functions as the Thioimide intermediate in the catalytic mechanism. The active-site Proton donor is Asp-196. Residue 228–229 participates in substrate binding; sequence HE. 257–258 contacts NADPH; sequence RG.

The protein belongs to the GTP cyclohydrolase I family. QueF type 2 subfamily. As to quaternary structure, homodimer.

It is found in the cytoplasm. The catalysed reaction is 7-aminomethyl-7-carbaguanine + 2 NADP(+) = 7-cyano-7-deazaguanine + 2 NADPH + 3 H(+). It participates in tRNA modification; tRNA-queuosine biosynthesis. Its function is as follows. Catalyzes the NADPH-dependent reduction of 7-cyano-7-deazaguanine (preQ0) to 7-aminomethyl-7-deazaguanine (preQ1). This chain is NADPH-dependent 7-cyano-7-deazaguanine reductase, found in Sodalis glossinidius (strain morsitans).